The chain runs to 251 residues: Triosephosphate isomerase (251 aa).

9-11 (NWK) provides a ligand contact to substrate. The active-site Electrophile is the histidine 95. Glutamate 167 serves as the catalytic Proton acceptor. Substrate-binding positions include glycine 173, serine 213, and 234–235 (GG).

It belongs to the triosephosphate isomerase family. As to quaternary structure, homodimer.

It localises to the cytoplasm. It carries out the reaction D-glyceraldehyde 3-phosphate = dihydroxyacetone phosphate. Its pathway is carbohydrate biosynthesis; gluconeogenesis. It functions in the pathway carbohydrate degradation; glycolysis; D-glyceraldehyde 3-phosphate from glycerone phosphate: step 1/1. Involved in the gluconeogenesis. Catalyzes stereospecifically the conversion of dihydroxyacetone phosphate (DHAP) to D-glyceraldehyde-3-phosphate (G3P). In Ligilactobacillus salivarius (strain UCC118) (Lactobacillus salivarius), this protein is Triosephosphate isomerase.